Here is a 239-residue protein sequence, read N- to C-terminus: Probable intron-encoded endonuclease I-ZbiI (239 aa).

Belongs to the LAGLIDADG endonuclease family.

It is found in the mitochondrion. Its function is as follows. Endonuclease involved in mitochondrial 21S rRNA gene intron homing. This chain is Probable intron-encoded endonuclease I-ZbiI, found in Zygosaccharomyces bisporus.